The sequence spans 417 residues: D-amino acid dehydrogenase (417 aa).

3 to 17 (VIVLGSGVIGVTAAW) is an FAD binding site.

This sequence belongs to the DadA oxidoreductase family. Requires FAD as cofactor.

The catalysed reaction is a D-alpha-amino acid + A + H2O = a 2-oxocarboxylate + AH2 + NH4(+). Its pathway is amino-acid degradation; D-alanine degradation; NH(3) and pyruvate from D-alanine: step 1/1. Oxidative deamination of D-amino acids. This is D-amino acid dehydrogenase from Methylobacillus flagellatus (strain ATCC 51484 / DSM 6875 / VKM B-1610 / KT).